The sequence spans 367 residues: Phosphoribosylaminoimidazole-succinocarboxamide synthase (367 aa).

Belongs to the SAICAR synthetase family.

It carries out the reaction 5-amino-1-(5-phospho-D-ribosyl)imidazole-4-carboxylate + L-aspartate + ATP = (2S)-2-[5-amino-1-(5-phospho-beta-D-ribosyl)imidazole-4-carboxamido]succinate + ADP + phosphate + 2 H(+). Its pathway is purine metabolism; IMP biosynthesis via de novo pathway; 5-amino-1-(5-phospho-D-ribosyl)imidazole-4-carboxamide from 5-amino-1-(5-phospho-D-ribosyl)imidazole-4-carboxylate: step 1/2. This is Phosphoribosylaminoimidazole-succinocarboxamide synthase from Shewanella baltica (strain OS155 / ATCC BAA-1091).